Consider the following 162-residue polypeptide: Podoplanin (162 aa).

An N-terminal signal peptide occupies residues 1–22 (MWKVSALLFVLGSASLWVLAEG). Residues 23-57 (ASTGQPEDDTETTGLEGGVAMPGAEDDVVTPGTSE) are disordered. The Extracellular segment spans residues 23–131 (ASTGQPEDDT…EKDGLSTVTL (109 aa)). O-linked (GalNAc...) threonine glycosylation is found at T25, T32, T34, T35, T52, T55, T65, T66, T76, and T85. A compositionally biased stretch (polar residues) spans 85–108 (TSESTVHAQEQSPSATASNVATSH). The interval 85–119 (TSESTVHAQEQSPSATASNVATSHSTEKVDGDTQT) is disordered. O-linked (GalNAc...) serine glycosylation is found at S86 and S88. O-linked (GalNAc...) threonine glycosylation occurs at T89. O-linked (GalNAc...) serine glycans are attached at residues S96 and S98. O-linked (GalNAc...) threonine glycosylation is present at T100. O-linked (GalNAc...) serine glycosylation is present at S102. O-linked (GalNAc...) threonine glycosylation occurs at T106. S107 and S109 each carry an O-linked (GalNAc...) serine glycan. The span at 109–119 (STEKVDGDTQT) shows a compositional bias: basic and acidic residues. Residues T110, T117, T119, and T120 are each glycosylated (O-linked (GalNAc...) threonine). A helical membrane pass occupies residues 132 to 152 (VGIIVGVLLAIGFIGAIIVVV). A requires for dimerization and lipid rafts association region spans residues 133-137 (GIIVG). Topologically, residues 153–162 (MRKMSGRYSP) are cytoplasmic. Residues 154–155 (RK) form a requires for interaction with MSN and EZR region.

Belongs to the podoplanin family. In terms of assembly, homodimer. Interacts with CLEC1B; the interaction is independent of CLEC1B glycosylation and activates CLEC1B; the interaction is dependent of sialic acid on O-glycans. Interacts with CD9; this interaction is homophilic and attenuates platelet aggregation and pulmonary metastasis induced by PDPN. Interacts with LGALS8; the interaction is glycosylation-dependent; may participate in connection of the lymphatic endothelium to the surrounding extracellular matrix. Interacts with HSPA9. Interacts (via extracellular domain) with CD44; this interaction is required for PDPN-mediated directional migration and regulation of lamellipodia extension/stabilization during cell spreading and migration. Interacts (via cytoplasmic domain) with MSN and EZR; activates RHOA and promotes epithelial-mesenchymal transition. Interacts with CCL21; relocalized PDPN to the basolateral membrane. In terms of processing, extensively O-glycosylated. Contains sialic acid residues. O-glycosylation is necessary for platelet aggregation activity. Disialylated at Thr-52; sialic acid is critical for platelet-aggregating activity and for CLEC1B interaction. Post-translationally, the N-terminus is blocked. Cleaved by a metalloprotease within its extracellular (EC) domain, generating a membrane-bound C-terminal fragment (PCTF33) and an extracellular fragment. The resulting membrane-bound C-terminal fragment (PCTF33) is further processed between Val-150 and Val-151 by PSEN1/gamma-secretase generating the intracellular domain of podoplanin (PICD). As to expression, highly expressed in placenta, lung, skeletal muscle and brain. Weakly expressed in brain, kidney and liver. In placenta, expressed on the apical plasma membrane of endothelium. In lung, expressed in alveolar epithelium. Up-regulated in colorectal tumors and expressed in 25% of early oral squamous cell carcinomas.

The protein localises to the membrane. The protein resides in the cell projection. Its subcellular location is the lamellipodium membrane. It localises to the filopodium membrane. It is found in the microvillus membrane. The protein localises to the ruffle membrane. The protein resides in the membrane raft. Its subcellular location is the apical cell membrane. It localises to the basolateral cell membrane. It is found in the invadopodium. The protein localises to the cytoplasm. The protein resides in the cytosol. Functionally, mediates effects on cell migration and adhesion through its different partners. During development plays a role in blood and lymphatic vessels separation by binding CLEC1B, triggering CLEC1B activation in platelets and leading to platelet activation and/or aggregation. Interaction with CD9, on the contrary, attenuates platelet aggregation induced by PDPN. Through MSN or EZR interaction promotes epithelial-mesenchymal transition (EMT) leading to ERZ phosphorylation and triggering RHOA activation leading to cell migration increase and invasiveness. Interaction with CD44 promotes directional cell migration in epithelial and tumor cells. In lymph nodes (LNs), controls fibroblastic reticular cells (FRCs) adhesion to the extracellular matrix (ECM) and contraction of the actomyosin by maintaining ERM proteins (EZR; MSN and RDX) and MYL9 activation through association with unknown transmembrane proteins. Engagement of CLEC1B by PDPN promotes FRCs relaxation by blocking lateral membrane interactions leading to reduction of ERM proteins (EZR; MSN and RDX) and MYL9 activation. Through binding with LGALS8 may participate in connection of the lymphatic endothelium to the surrounding extracellular matrix. In keratinocytes, induces changes in cell morphology showing an elongated shape, numerous membrane protrusions, major reorganization of the actin cytoskeleton, increased motility and decreased cell adhesion. Controls invadopodia stability and maturation leading to efficient degradation of the extracellular matrix (ECM) in tumor cells through modulation of RHOC activity in order to activate ROCK1/ROCK2 and LIMK1/LIMK2 and inactivation of CFL1. Required for normal lung cell proliferation and alveolus formation at birth. Does not function as a water channel or as a regulator of aquaporin-type water channels. Does not have any effect on folic acid or amino acid transport. The protein is Podoplanin of Homo sapiens (Human).